A 149-amino-acid chain; its full sequence is Transcription antitermination protein NusB (149 aa).

It belongs to the NusB family.

Involved in transcription antitermination. Required for transcription of ribosomal RNA (rRNA) genes. Binds specifically to the boxA antiterminator sequence of the ribosomal RNA (rrn) operons. The sequence is that of Transcription antitermination protein NusB from Caulobacter vibrioides (strain ATCC 19089 / CIP 103742 / CB 15) (Caulobacter crescentus).